A 253-amino-acid chain; its full sequence is Putative ankyrin repeat protein NMB1133/NMB1171 (253 aa).

ANK repeat units follow at residues 196–225 (DGYT…NPAS) and 229–252 (EGYT…LEPR).

This is Putative ankyrin repeat protein NMB1133/NMB1171 from Neisseria meningitidis serogroup B (strain ATCC BAA-335 / MC58).